Reading from the N-terminus, the 457-residue chain is Phosphoglucosamine mutase (457 aa).

The active-site Phosphoserine intermediate is Ser103. Mg(2+) is bound by residues Ser103, Asp245, Asp247, and Asp249. Phosphoserine is present on Ser103.

Belongs to the phosphohexose mutase family. It depends on Mg(2+) as a cofactor. Post-translationally, activated by phosphorylation.

The catalysed reaction is alpha-D-glucosamine 1-phosphate = D-glucosamine 6-phosphate. Catalyzes the conversion of glucosamine-6-phosphate to glucosamine-1-phosphate. The chain is Phosphoglucosamine mutase from Syntrophotalea carbinolica (strain DSM 2380 / NBRC 103641 / GraBd1) (Pelobacter carbinolicus).